The following is a 213-amino-acid chain: Transcriptional regulatory protein YdfI (213 aa).

Residues 3 to 118 (KVLIVDDHLV…TLFHTMDAAI (116 aa)) enclose the Response regulatory domain. The residue at position 54 (D54) is a 4-aspartylphosphate. The HTH luxR-type domain occupies 142–207 (KQRNETQLTE…EAVTIAMQKG (66 aa)). Positions 166–185 (SKAIAFDLGVSERTVKSRLT) form a DNA-binding region, H-T-H motif.

Post-translationally, phosphorylated by YdfH.

The protein localises to the cytoplasm. In terms of biological role, member of the two-component regulatory system YdfH/YdfI. Regulates the transcription of ydfJ by binding to its promoter region. This Bacillus subtilis (strain 168) protein is Transcriptional regulatory protein YdfI (ydfI).